Consider the following 549-residue polypeptide: MPPKSTTTKHIFVTGGVASSLGKGLTASSLGMLLKARGLRVVMQKLDPYLNVDPGTMNPFQHGEVFVTNDGAETDLDIGHYERFLDRDLDGSANVTTGQVYSTVIAKERRGEYLGDTVQVIPHITNEIKHRIRRMATDEVDVVITEVGGTVGDIESLPFLETVRQVRHEVGRDNVFVVHISLLPYIGPSGELKTKPTQHSVAALRNIGIQPDAIVLRCDREVPTAIKRKISLMCDVDEAAVVACPDARSIYDIPKTVHGEGLDAYVVRKLDLPFRDVDWTTWDDLLDRVHKPDHEINLALVGKYIDLPDAYLSVTEALRAGGFANRARVKIKWVTSDDCKTPAGAAGQLGDVDAICIPGGFGDRGVSGKVGAIQYAREHRIPLLGLCLGLQCIVIEAARNLADIPDANSTEFDSATGHPVISTMAEQLDIVAGEGDMGGTMRLGMYPAKLAEGSIVREVYDGKEYVEERHRHRYEVNNAYRAELEKKAGLQFSGTSPDGKLVEYVEYPREVHPYLVATQAHPELRSRPTRPHPLFAGLVKAAVERKTGK.

The interval 1-272 (MPPKSTTTKH…DAYVVRKLDL (272 aa)) is amidoligase domain. Ser19 lines the CTP pocket. Ser19 serves as a coordination point for UTP. ATP-binding positions include 20–25 (SLGKGL) and Asp77. Asp77 and Glu146 together coordinate Mg(2+). CTP contacts are provided by residues 153–155 (DIE), 193–198 (KTKPTQ), and Lys229. UTP contacts are provided by residues 193-198 (KTKPTQ) and Lys229. The region spanning 297 to 548 (NLALVGKYID…VKAAVERKTG (252 aa)) is the Glutamine amidotransferase type-1 domain. L-glutamine is bound at residue Gly360. Residue Cys387 is the Nucleophile; for glutamine hydrolysis of the active site. L-glutamine is bound by residues 388-391 (LGLQ), Glu411, and Arg473. Catalysis depends on residues His521 and Glu523.

The protein belongs to the CTP synthase family. In terms of assembly, homotetramer.

It carries out the reaction UTP + L-glutamine + ATP + H2O = CTP + L-glutamate + ADP + phosphate + 2 H(+). The enzyme catalyses L-glutamine + H2O = L-glutamate + NH4(+). It catalyses the reaction UTP + NH4(+) + ATP = CTP + ADP + phosphate + 2 H(+). It participates in pyrimidine metabolism; CTP biosynthesis via de novo pathway; CTP from UDP: step 2/2. Its activity is regulated as follows. Allosterically activated by GTP, when glutamine is the substrate; GTP has no effect on the reaction when ammonia is the substrate. The allosteric effector GTP functions by stabilizing the protein conformation that binds the tetrahedral intermediate(s) formed during glutamine hydrolysis. Inhibited by the product CTP, via allosteric rather than competitive inhibition. Catalyzes the ATP-dependent amination of UTP to CTP with either L-glutamine or ammonia as the source of nitrogen. Regulates intracellular CTP levels through interactions with the four ribonucleotide triphosphates. The protein is CTP synthase of Streptomyces avermitilis (strain ATCC 31267 / DSM 46492 / JCM 5070 / NBRC 14893 / NCIMB 12804 / NRRL 8165 / MA-4680).